The primary structure comprises 273 residues: DnaJ homolog subfamily C member 27-A (273 aa).

Residues 23–30 (GNAEVGKS), 71–75 (DMAGH), and 134–137 (NKID) contribute to the GTP site. In terms of domain architecture, J spans 217-273 (DSWDMLGVKPGATRDEVNKAYRKLAVLLHPDKCMAPGSEDAFKAVVNARTALLKNIK).

This sequence belongs to the small GTPase superfamily. Rab family.

The protein localises to the nucleus. Its function is as follows. GTPase possibly involved in regulation of the MEK/ERK pathway. The sequence is that of DnaJ homolog subfamily C member 27-A (dnajc27-a) from Xenopus laevis (African clawed frog).